The primary structure comprises 184 residues: ATP synthase subunit b, chloroplastic (184 aa).

Residues 27–49 (LATNPINLSIVIGVLIFFGKGVL) traverse the membrane as a helical segment.

The protein belongs to the ATPase B chain family. As to quaternary structure, F-type ATPases have 2 components, F(1) - the catalytic core - and F(0) - the membrane proton channel. F(1) has five subunits: alpha(3), beta(3), gamma(1), delta(1), epsilon(1). F(0) has four main subunits: a(1), b(1), b'(1) and c(10-14). The alpha and beta chains form an alternating ring which encloses part of the gamma chain. F(1) is attached to F(0) by a central stalk formed by the gamma and epsilon chains, while a peripheral stalk is formed by the delta, b and b' chains.

The protein resides in the plastid. It localises to the chloroplast thylakoid membrane. Its function is as follows. F(1)F(0) ATP synthase produces ATP from ADP in the presence of a proton or sodium gradient. F-type ATPases consist of two structural domains, F(1) containing the extramembraneous catalytic core and F(0) containing the membrane proton channel, linked together by a central stalk and a peripheral stalk. During catalysis, ATP synthesis in the catalytic domain of F(1) is coupled via a rotary mechanism of the central stalk subunits to proton translocation. Functionally, component of the F(0) channel, it forms part of the peripheral stalk, linking F(1) to F(0). This is ATP synthase subunit b, chloroplastic from Lotus japonicus (Lotus corniculatus var. japonicus).